Consider the following 96-residue polypeptide: MYKDRDTNQRDSRFENQQDGFKKNSNFRFFKRKSCKFCDSGKHPDYKDFDFLKKFITEQGKILPKRITGTSAKHQRRLALEIKRARYMALLPFVKK.

The protein belongs to the bacterial ribosomal protein bS18 family. In terms of assembly, part of the 30S ribosomal subunit. Forms a tight heterodimer with protein bS6.

Binds as a heterodimer with protein bS6 to the central domain of the 16S rRNA, where it helps stabilize the platform of the 30S subunit. This is Small ribosomal subunit protein bS18 from Borreliella burgdorferi (strain ATCC 35210 / DSM 4680 / CIP 102532 / B31) (Borrelia burgdorferi).